The sequence spans 124 residues: Ribonuclease P protein component (124 aa).

Belongs to the RnpA family. Consists of a catalytic RNA component (M1 or rnpB) and a protein subunit.

It carries out the reaction Endonucleolytic cleavage of RNA, removing 5'-extranucleotides from tRNA precursor.. In terms of biological role, RNaseP catalyzes the removal of the 5'-leader sequence from pre-tRNA to produce the mature 5'-terminus. It can also cleave other RNA substrates such as 4.5S RNA. The protein component plays an auxiliary but essential role in vivo by binding to the 5'-leader sequence and broadening the substrate specificity of the ribozyme. The sequence is that of Ribonuclease P protein component from Mycolicibacterium gilvum (strain PYR-GCK) (Mycobacterium gilvum (strain PYR-GCK)).